The primary structure comprises 245 residues: 1-(5-phosphoribosyl)-5-[(5-phosphoribosylamino)methylideneamino] imidazole-4-carboxamide isomerase (245 aa).

D8 (proton acceptor) is an active-site residue. Residue D131 is the Proton donor of the active site.

The protein belongs to the HisA/HisF family.

The protein localises to the cytoplasm. It carries out the reaction 1-(5-phospho-beta-D-ribosyl)-5-[(5-phospho-beta-D-ribosylamino)methylideneamino]imidazole-4-carboxamide = 5-[(5-phospho-1-deoxy-D-ribulos-1-ylimino)methylamino]-1-(5-phospho-beta-D-ribosyl)imidazole-4-carboxamide. It functions in the pathway amino-acid biosynthesis; L-histidine biosynthesis; L-histidine from 5-phospho-alpha-D-ribose 1-diphosphate: step 4/9. The chain is 1-(5-phosphoribosyl)-5-[(5-phosphoribosylamino)methylideneamino] imidazole-4-carboxamide isomerase from Neisseria gonorrhoeae (strain NCCP11945).